We begin with the raw amino-acid sequence, 274 residues long: MPFRSNNPITRDELLSRFFPQFHPVTTFNSGLSGGSFLIEHQGQRFVVRQPHDPDAPQSAFLRQYRALSQLPACIAPKPHLYLRDWMVVDYLPGAVKTYLPDTNELAGLLYYLHQQPRFGWRITLLPLLELYWQQSDPARRTVGWLRMLKRLRKAREPRPLRLSPLHMDVHAGNLVHSASGLKLIDWEYAGDGDIALELAAVWVENTEQHLQLVNDYATRAKIYPAQLWRQVRRWFPWLLMLKAGWFEYRWRQTGDQQFIRLADDTWRQLLIKQ.

It belongs to the thiamine kinase family.

The enzyme catalyses thiamine + ATP = thiamine phosphate + ADP + H(+). It participates in cofactor biosynthesis; thiamine diphosphate biosynthesis; thiamine phosphate from thiamine: step 1/1. In terms of biological role, catalyzes the ATP-dependent phosphorylation of thiamine to thiamine phosphate. Is involved in thiamine salvage. This Escherichia coli O9:H4 (strain HS) protein is Thiamine kinase.